We begin with the raw amino-acid sequence, 281 residues long: uncharacterized protein (281 aa).

Positions 1–23 are cleaved as a signal peptide; that stretch reads MKLYRSLKAALLPGICTSILLAS. Residue cysteine 24 is the site of N-palmitoyl cysteine attachment. Cysteine 24 is lipidated: S-diacylglycerol cysteine. The disordered stretch occupies residues 145–165; that stretch reads HHDHNHMHNHEHEHEEHHDEE. A compositionally biased stretch (basic and acidic residues) spans 150–161; it reads HMHNHEHEHEEH.

The protein localises to the cell membrane. This is an uncharacterized protein from Mycoplasma genitalium (strain ATCC 33530 / DSM 19775 / NCTC 10195 / G37) (Mycoplasmoides genitalium).